Here is a 347-residue protein sequence, read N- to C-terminus: N6-Methyl-AMP deaminase-L (347 aa).

His19 and His21 together coordinate Zn(2+). N(6)-methyl-AMP contacts are provided by residues His21, Asn23, His69, 101-104 (STPR), Asp142, and Gly175. His202 is a binding site for Zn(2+). N(6)-methyl-AMP is bound by residues Glu205, Asp283, and Asp284. Glu205 (proton donor) is an active-site residue. Asp283 lines the Zn(2+) pocket.

Belongs to the metallo-dependent hydrolases superfamily. Adenosine and AMP deaminases family. Monomer. Requires Zn(2+) as cofactor.

The catalysed reaction is N(6)-methyl-AMP + H2O + H(+) = IMP + methylamine. Catalyzes the hydrolysis of the free cytosolic methylated adenosine nucleotide N(6)-methyl-AMP (N6-mAMP) to produce inositol monophosphate (IMP) and methylamine. Is required for the catabolism of cytosolic N6-mAMP, which is derived from the degradation of mRNA containing N6-methylated adenine (m6A). The chain is N6-Methyl-AMP deaminase-L (mapda.L) from Xenopus laevis (African clawed frog).